Here is a 330-residue protein sequence, read N- to C-terminus: Pyridoxal 5'-phosphate synthase subunit PdxS (330 aa).

Aspartate 23 provides a ligand contact to D-ribose 5-phosphate. Catalysis depends on lysine 80, which acts as the Schiff-base intermediate with D-ribose 5-phosphate. Glycine 152 provides a ligand contact to D-ribose 5-phosphate. Residue arginine 164 participates in D-glyceraldehyde 3-phosphate binding. D-ribose 5-phosphate contacts are provided by residues glycine 250 and 271–272 (GS).

It belongs to the PdxS/SNZ family. In the presence of PdxT, forms a dodecamer of heterodimers.

The catalysed reaction is aldehydo-D-ribose 5-phosphate + D-glyceraldehyde 3-phosphate + L-glutamine = pyridoxal 5'-phosphate + L-glutamate + phosphate + 3 H2O + H(+). Its pathway is cofactor biosynthesis; pyridoxal 5'-phosphate biosynthesis. In terms of biological role, catalyzes the formation of pyridoxal 5'-phosphate from ribose 5-phosphate (RBP), glyceraldehyde 3-phosphate (G3P) and ammonia. The ammonia is provided by the PdxT subunit. Can also use ribulose 5-phosphate and dihydroxyacetone phosphate as substrates, resulting from enzyme-catalyzed isomerization of RBP and G3P, respectively. The protein is Pyridoxal 5'-phosphate synthase subunit PdxS of Methanocaldococcus jannaschii (strain ATCC 43067 / DSM 2661 / JAL-1 / JCM 10045 / NBRC 100440) (Methanococcus jannaschii).